The following is a 98-amino-acid chain: NADH-ubiquinone oxidoreductase chain 4L (98 aa).

The next 3 helical transmembrane spans lie at 1 to 21 (MSMV…GLLM), 29 to 49 (SLLC…LTIL), and 61 to 81 (IILL…LVMV).

It belongs to the complex I subunit 4L family. As to quaternary structure, core subunit of respiratory chain NADH dehydrogenase (Complex I) which is composed of 45 different subunits.

The protein localises to the mitochondrion inner membrane. It carries out the reaction a ubiquinone + NADH + 5 H(+)(in) = a ubiquinol + NAD(+) + 4 H(+)(out). Its function is as follows. Core subunit of the mitochondrial membrane respiratory chain NADH dehydrogenase (Complex I) which catalyzes electron transfer from NADH through the respiratory chain, using ubiquinone as an electron acceptor. Part of the enzyme membrane arm which is embedded in the lipid bilayer and involved in proton translocation. This chain is NADH-ubiquinone oxidoreductase chain 4L (MT-ND4L), found in Bos mutus grunniens (Wild yak).